We begin with the raw amino-acid sequence, 430 residues long: Enolase (430 aa).

Q164 provides a ligand contact to (2R)-2-phosphoglycerate. E206 acts as the Proton donor in catalysis. 3 residues coordinate Mg(2+): D243, E288, and D315. (2R)-2-phosphoglycerate-binding residues include K340, R369, S370, and K391. K340 (proton acceptor) is an active-site residue.

It belongs to the enolase family. Mg(2+) serves as cofactor.

It localises to the cytoplasm. The protein resides in the secreted. It is found in the cell surface. It carries out the reaction (2R)-2-phosphoglycerate = phosphoenolpyruvate + H2O. It functions in the pathway carbohydrate degradation; glycolysis; pyruvate from D-glyceraldehyde 3-phosphate: step 4/5. Catalyzes the reversible conversion of 2-phosphoglycerate (2-PG) into phosphoenolpyruvate (PEP). It is essential for the degradation of carbohydrates via glycolysis. The polypeptide is Enolase (Lysinibacillus sphaericus (strain C3-41)).